We begin with the raw amino-acid sequence, 248 residues long: Adenosylcobinamide-GDP ribazoletransferase (248 aa).

Transmembrane regions (helical) follow at residues 36-56 (FFLP…YLGL), 59-79 (FLPS…ITGG), 114-134 (GTIA…SLVL), 137-157 (YSIA…FLCL), 170-190 (IFIG…VLVL), and 199-219 (ATII…LLCL).

The protein belongs to the CobS family. Mg(2+) serves as cofactor.

It is found in the cell membrane. It catalyses the reaction alpha-ribazole + adenosylcob(III)inamide-GDP = adenosylcob(III)alamin + GMP + H(+). It carries out the reaction alpha-ribazole 5'-phosphate + adenosylcob(III)inamide-GDP = adenosylcob(III)alamin 5'-phosphate + GMP + H(+). It functions in the pathway cofactor biosynthesis; adenosylcobalamin biosynthesis; adenosylcobalamin from cob(II)yrinate a,c-diamide: step 7/7. Joins adenosylcobinamide-GDP and alpha-ribazole to generate adenosylcobalamin (Ado-cobalamin). Also synthesizes adenosylcobalamin 5'-phosphate from adenosylcobinamide-GDP and alpha-ribazole 5'-phosphate. The sequence is that of Adenosylcobinamide-GDP ribazoletransferase from Clostridium botulinum (strain Loch Maree / Type A3).